Consider the following 247-residue polypeptide: Submandibular gland secretory Glx-rich protein CB (247 aa).

Residues 1–18 (MLVVLLTAALLALSSAQG) form the signal peptide. The interval 14–219 (SSAQGTDEEV…PQHYRGRPPK (206 aa)) is disordered. Low complexity-rich tracts occupy residues 39–50 (PVDSGSDPPSAD), 58–71 (EGES…EPPA), 81–93 (QQEP…QEPP), 104–116 (QQEP…QEPP), 126–139 (QQQQ…QEPP), 150–159 (QQESTQAENQ), and 178–196 (VESP…QQTN). Repeat copies occupy residues 67–89 (EEPP…QAEN), 90–112 (QEPP…QAEN), 113–135 (QEPP…QAEN), 136–158 (QEPP…QAEN), and 159–181 (QEPS…VESP). The 5 X 23 AA tandem repeats stretch occupies residues 67-181 (EEPPATSGSE…QPEEGNVESP (115 aa)). Basic and acidic residues predominate over residues 197 to 212 (PEEKPPAPKTQEEPQH).

Submandibular gland acinar cells.

It localises to the secreted. Functionally, GRP proteins have a marked affinity for hydroxyapatite. They may play a role in the formation of the protective acquired pellicle at the saliva-tooth interface. In Rattus norvegicus (Rat), this protein is Submandibular gland secretory Glx-rich protein CB (Grpcb).